The chain runs to 120 residues: Large ribosomal subunit protein uL18 (120 aa).

The interval 1–26 is disordered; it reads MSKAKVTNARRKRSVRLKLRRSGGGR. Basic residues predominate over residues 8 to 23; the sequence is NARRKRSVRLKLRRSG.

It belongs to the universal ribosomal protein uL18 family. In terms of assembly, part of the 50S ribosomal subunit; part of the 5S rRNA/L5/L18/L25 subcomplex. Contacts the 5S and 23S rRNAs.

Its function is as follows. This is one of the proteins that bind and probably mediate the attachment of the 5S RNA into the large ribosomal subunit, where it forms part of the central protuberance. The protein is Large ribosomal subunit protein uL18 of Bradyrhizobium diazoefficiens (strain JCM 10833 / BCRC 13528 / IAM 13628 / NBRC 14792 / USDA 110).